We begin with the raw amino-acid sequence, 357 residues long: Putative diaminopimelate epimerase, chloroplastic (357 aa).

Residues 1 to 47 constitute a chloroplast transit peptide; sequence MSSATAAATATIAAAAAAAAKLAATPAPAPSRRRLTLRGNPTARRCV. Residues cysteine 145 and cysteine 300 contribute to the active site.

This sequence belongs to the diaminopimelate epimerase family.

The protein resides in the plastid. The protein localises to the chloroplast. The enzyme catalyses (2S,6S)-2,6-diaminopimelate = meso-2,6-diaminopimelate. Its pathway is amino-acid biosynthesis; L-lysine biosynthesis via DAP pathway; DL-2,6-diaminopimelate from LL-2,6-diaminopimelate: step 1/1. The protein is Putative diaminopimelate epimerase, chloroplastic (DAPF) of Oryza sativa subsp. indica (Rice).